Reading from the N-terminus, the 335-residue chain is MSKRKAPQETLNGGITDMLVELANFEKNVSQAIHKYNAYRKAASVIAKYPHKIKSGAEAKKLPGVGTKIAEKIDEFLATGKLRKLEKIRQDDTSSSINFLTRVTGIGPSAARKLVDEGIKTLEDLRKNEDKLNHHQRIGLKYFEDFEKRIPREEMLQMQDIVLNEVKKLDPEYIATVCGSFRRGAESSGDMDVLLTHPNFTSESSKQPKLLHRVVEQLQKVRFITDTLSKGETKFMGVCQLPSENDENEYPHRRIDIRLIPKDQYYCGVLYFTGSDIFNKNMRAHALEKGFTINEYTIRPLGVTGVAGEPLPVDSEQDIFDYIQWRYREPKDRSE.

A Glycyl lysine isopeptide (Lys-Gly) (interchain with G-Cter in ubiquitin) cross-link involves residue K41. A K(+)-binding site is contributed by K60. K60 provides a ligand contact to Na(+). A Glycyl lysine isopeptide (Lys-Gly) (interchain with G-Cter in ubiquitin) cross-link involves residue K61. K(+)-binding residues include L62 and V65. Na(+) is bound by residues L62 and V65. The active-site Nucleophile; Schiff-base intermediate with DNA; for 5'-dRP lyase activity is K72. K72 is modified (N6-acetyllysine). A Glycyl lysine isopeptide (Lys-Gly) (interchain with G-Cter in ubiquitin) cross-link involves residue K81. R83 carries the omega-N-methylarginine; by PRMT6 modification. Residues T101, V103, and I106 each contribute to the K(+) site. Positions 101, 103, and 106 each coordinate Na(+). An a 2'-deoxyribonucleoside 5'-triphosphate-binding site is contributed by R149. Position 152 is an omega-N-methylarginine; by PRMT6 (R152). Positions 180, 183, 189, and 190 each coordinate a 2'-deoxyribonucleoside 5'-triphosphate. The tract at residues 183-192 (RGAESSGDMD) is DNA-binding. Mg(2+) contacts are provided by D190, D192, and D256.

It belongs to the DNA polymerase type-X family. Monomer. Binds single-stranded DNA (ssDNA). Interacts with APEX1, LIG1, LIG3, FEN1, PCNA and XRCC1. Interacts with HUWE1/ARF-BP1, STUB1/CHIP and USP47. Interacts with FAM168A. Mg(2+) serves as cofactor. In terms of processing, methylation by PRMT6 stimulates the polymerase activity by enhancing DNA binding and processivity. Ubiquitinated at Lys-41, Lys-61 and Lys-81: monoubiquitinated by HUWE1/ARF-BP1. Monoubiquitinated protein is then the target of STUB1/CHIP, which catalyzes polyubiquitination from monoubiquitin, leading to degradation by the proteasome. USP47 mediates the deubiquitination of monoubiquitinated protein, preventing polyubiquitination by STUB1/CHIP and its subsequent degradation.

The protein localises to the nucleus. It is found in the cytoplasm. The enzyme catalyses DNA(n) + a 2'-deoxyribonucleoside 5'-triphosphate = DNA(n+1) + diphosphate. It carries out the reaction a 5'-end 2'-deoxyribose-2'-deoxyribonucleotide-DNA = (2E,4S)-4-hydroxypenten-2-al-5-phosphate + a 5'-end 5'-phospho-2'-deoxyribonucleoside-DNA + H(+). It catalyses the reaction 2'-deoxyribonucleotide-(2'-deoxyribose 5'-phosphate)-2'-deoxyribonucleotide-DNA = a 3'-end 2'-deoxyribonucleotide-(2,3-dehydro-2,3-deoxyribose 5'-phosphate)-DNA + a 5'-end 5'-phospho-2'-deoxyribonucleoside-DNA + H(+). In terms of biological role, repair polymerase that plays a key role in base-excision repair. During this process, the damaged base is excised by specific DNA glycosylases, the DNA backbone is nicked at the abasic site by an apurinic/apyrimidic (AP) endonuclease, and POLB removes 5'-deoxyribose-phosphate from the preincised AP site acting as a 5'-deoxyribose-phosphate lyase (5'-dRP lyase); through its DNA polymerase activity, it adds one nucleotide to the 3' end of the arising single-nucleotide gap. Conducts 'gap-filling' DNA synthesis in a stepwise distributive fashion rather than in a processive fashion as for other DNA polymerases. It is also able to cleave sugar-phosphate bonds 3' to an intact AP site, acting as an AP lyase. In Rattus norvegicus (Rat), this protein is DNA polymerase beta (Polb).